The primary structure comprises 172 residues: Phosphopantetheine adenylyltransferase (172 aa).

Thr14 serves as a coordination point for substrate. Residues 14–15 (TF) and His22 each bind ATP. Positions 46, 78, and 92 each coordinate substrate. ATP contacts are provided by residues 93–95 (GMR), Glu103, and 128–134 (WLYISST).

The protein belongs to the bacterial CoaD family. As to quaternary structure, homohexamer. The cofactor is Mg(2+).

Its subcellular location is the cytoplasm. It catalyses the reaction (R)-4'-phosphopantetheine + ATP + H(+) = 3'-dephospho-CoA + diphosphate. It functions in the pathway cofactor biosynthesis; coenzyme A biosynthesis; CoA from (R)-pantothenate: step 4/5. Functionally, reversibly transfers an adenylyl group from ATP to 4'-phosphopantetheine, yielding dephospho-CoA (dPCoA) and pyrophosphate. The chain is Phosphopantetheine adenylyltransferase from Solidesulfovibrio magneticus (strain ATCC 700980 / DSM 13731 / RS-1) (Desulfovibrio magneticus).